The following is a 172-amino-acid chain: Shikimate kinase (172 aa).

Residue Ala11 to Glu16 participates in ATP binding. Thr15 serves as a coordination point for Mg(2+). Residues Asp33, Arg57, and Gly80 each coordinate substrate. Arg120 serves as a coordination point for ATP. Substrate is bound at residue Arg142.

The protein belongs to the shikimate kinase family. Monomer. Mg(2+) serves as cofactor.

It localises to the cytoplasm. It catalyses the reaction shikimate + ATP = 3-phosphoshikimate + ADP + H(+). Its pathway is metabolic intermediate biosynthesis; chorismate biosynthesis; chorismate from D-erythrose 4-phosphate and phosphoenolpyruvate: step 5/7. Functionally, catalyzes the specific phosphorylation of the 3-hydroxyl group of shikimic acid using ATP as a cosubstrate. The polypeptide is Shikimate kinase (Flavobacterium psychrophilum (strain ATCC 49511 / DSM 21280 / CIP 103535 / JIP02/86)).